A 322-amino-acid chain; its full sequence is Ribosomal RNA small subunit methyltransferase H (322 aa).

S-adenosyl-L-methionine contacts are provided by residues 34–36 (GGH), Asp-59, Phe-86, Asp-112, and Gln-119.

It belongs to the methyltransferase superfamily. RsmH family.

Its subcellular location is the cytoplasm. It carries out the reaction cytidine(1402) in 16S rRNA + S-adenosyl-L-methionine = N(4)-methylcytidine(1402) in 16S rRNA + S-adenosyl-L-homocysteine + H(+). In terms of biological role, specifically methylates the N4 position of cytidine in position 1402 (C1402) of 16S rRNA. The chain is Ribosomal RNA small subunit methyltransferase H from Chlorobium limicola (strain DSM 245 / NBRC 103803 / 6330).